The following is a 463-amino-acid chain: Hexokinase-7 (463 aa).

Positions 7–456 constitute a Hexokinase domain; sequence AAAEQVVAAL…SGLGAALIAA (450 aa). The interval 62-199 is hexokinase small subdomain; the sequence is NGTEEGLFYA…GLDMRVSALI (138 aa). The ADP site is built by Gly-76, Thr-77, and Asn-78. Residues Thr-165, Lys-166, Asn-200, and Asp-201 each coordinate D-glucose. The interval 200–445 is hexokinase large subdomain; the sequence is NDTVGTLAAG…KSVAVKLAND (246 aa). Thr-224 is a binding site for ADP. D-glucose-binding residues include Asn-227, Glu-255, and Glu-286. Gly-410 is a binding site for ADP.

Belongs to the hexokinase family. As to expression, expressed in roots, leaves, flowers, immature seeds and seed coat.

It localises to the cytoplasm. The enzyme catalyses a D-hexose + ATP = a D-hexose 6-phosphate + ADP + H(+). It carries out the reaction D-fructose + ATP = D-fructose 6-phosphate + ADP + H(+). It catalyses the reaction D-glucose + ATP = D-glucose 6-phosphate + ADP + H(+). Its pathway is carbohydrate metabolism; hexose metabolism. It participates in carbohydrate degradation; glycolysis; D-glyceraldehyde 3-phosphate and glycerone phosphate from D-glucose: step 1/4. Its function is as follows. Fructose and glucose phosphorylating enzyme. Functions in sugar signaling via a glycolysis-dependent manner under aerobic conditions, but its signaling role is suppressed when oxygen is deficient. The polypeptide is Hexokinase-7 (HXK7) (Oryza sativa subsp. japonica (Rice)).